A 497-amino-acid polypeptide reads, in one-letter code: L-asparagine permease (497 aa).

12 helical membrane-spanning segments follow: residues 34–54 (QVQMIAIGGAIGTGLFLGAGA), 58–78 (MAGPALALVYLICGIFSFFIL), 109–129 (VAGWMYFINWAMTGIVDITAV), 146–166 (VFALGALTIVGTMNMIGVKWF), 171–191 (FWFALIKVLAIVIFLVVGTIF), 219–239 (LLPALVLIQGVVFAFASIELV), 264–284 (IGLFYVGSVVLLVLLLPWNAY), 298–318 (LGVPYIGSIMNIVVLTAALSS), 353–373 (YAGILATLVVYVVGVFLNYLV), 378–398 (FEIVLNFASLGIIASWAFIMV), 422–442 (APFTSWLTLLFLLSVLVLMAF), and 448–468 (TYTIASLPLIAILLVAGWFGV).

The protein belongs to the amino acid-polyamine-organocation (APC) superfamily. Amino acid transporter (AAT) (TC 2.A.3.1) family.

Its subcellular location is the cell inner membrane. In Salmonella typhimurium (strain LT2 / SGSC1412 / ATCC 700720), this protein is L-asparagine permease (ansP).